The following is a 698-amino-acid chain: Transferrin-binding protein B (698 aa).

The first 20 residues, 1 to 20, serve as a signal peptide directing secretion; sequence MNNPLVNQAAMVLPVFLLSA. A lipid anchor (N-palmitoyl cysteine) is attached at Cys-21. Cys-21 carries S-diacylglycerol cysteine lipidation. Disordered regions lie at residues 33–58, 83–102, 294–324, 349–383, 428–479, and 669–698; these read VDTEAPRPAPKYQDVSSEKPQAQKDQ, IKLSENDWEQTDNGDIKNPS, FSGKAEATDKPKNDGETKEHPFVSDSSSLSG, GSAKTQDKPRNGAVASGGAGAAASNGAAGTSSENS, ESGK…GDAN, and TKNATDASGNGNSASSATVVFGAKRQKPVQ. The span at 46 to 56 shows a compositional bias: polar residues; the sequence is DVSSEKPQAQK. The span at 299–315 shows a compositional bias: basic and acidic residues; it reads EATDKPKNDGETKEHPF. Residues 369–383 are compositionally biased toward low complexity; sequence AAASNGAAGTSSENS. A compositionally biased stretch (polar residues) spans 460–476; sequence QAGTAENGNPAASNTAG. Residues 671 to 686 are compositionally biased toward low complexity; the sequence is NATDASGNGNSASSAT.

This sequence belongs to the TbpB family. As to quaternary structure, binds only human holo-transferrin (TF), via the TF C-terminus. Forms a large complex with TbpA and TF. Interacts via its C-terminal domain with Slam1.

It is found in the cell outer membrane. The protein resides in the cell surface. Neisseria acquires iron by extracting it from serum transferrin (TF) in its human host. Acts as a TF receptor and is required for TF utilization. Involved in the initial capture of TF. Helps select only those TF molecules that can be used as an iron source and concentrates them on the cell surface, maintaining the iron-loaded status of the TF C-terminal lobe until its delivery to TbpA. This chain is Transferrin-binding protein B, found in Neisseria meningitidis serogroup A / serotype 4A (strain DSM 15465 / Z2491).